The primary structure comprises 257 residues: Type III pantothenate kinase (257 aa).

Residue 6–13 (DAGNTNIV) participates in ATP binding. Substrate-binding positions include Tyr-100 and 107-110 (GADR). The Proton acceptor role is filled by Asp-109. Position 129 (Asp-129) interacts with K(+). Thr-132 contacts ATP. Thr-184 lines the substrate pocket.

It belongs to the type III pantothenate kinase family. In terms of assembly, homodimer. Requires NH4(+) as cofactor. It depends on K(+) as a cofactor.

Its subcellular location is the cytoplasm. It carries out the reaction (R)-pantothenate + ATP = (R)-4'-phosphopantothenate + ADP + H(+). Its pathway is cofactor biosynthesis; coenzyme A biosynthesis; CoA from (R)-pantothenate: step 1/5. Its function is as follows. Catalyzes the phosphorylation of pantothenate (Pan), the first step in CoA biosynthesis. The sequence is that of Type III pantothenate kinase from Clostridium botulinum (strain Alaska E43 / Type E3).